The following is a 294-amino-acid chain: MHNTTKRVTVPALEEILYEPIKVLDYGFIRVIDYMGDDSAIVQAARVSYGKGTKQLNQDKGLINYLLRHYHTTPFEMCDIKFHIKLPIFIARQWIRHRTASVNEYSARYSILGNEFYLPEPANIASQSAVNKQCREGDSLPKEVAEKVLAILEEDARQCYGHYKELMNADEEGNIIDENATGIARELARMNLTLNYYTEWYWKINLHNLLHFLRLRADPHAQYEIRVYAEKMLEIVKAWVPFVYEAFEEYRLQGANISRKGLDVIKRMINGEKVTHETSDMTKREWEELMKIFG.

Residues 27–250 (GFIRVIDYMG…PFVYEAFEEY (224 aa)) form the ThyX domain. FAD contacts are provided by residues T73, 96–98 (RHR), and E104. Residues 93-96 (QWIR), 104-108 (EYSAR), and R189 each bind dUMP. A ThyX motif motif is present at residues 96–106 (RHRTASVNEYS). Residues 205 to 207 (NLH) and H211 each bind FAD. R216 lines the dUMP pocket. Residue R216 is the Involved in ionization of N3 of dUMP, leading to its activation of the active site.

Belongs to the thymidylate synthase ThyX family. In terms of assembly, homotetramer. FAD serves as cofactor.

It catalyses the reaction dUMP + (6R)-5,10-methylene-5,6,7,8-tetrahydrofolate + NADPH + H(+) = dTMP + (6S)-5,6,7,8-tetrahydrofolate + NADP(+). The protein operates within pyrimidine metabolism; dTTP biosynthesis. In terms of biological role, catalyzes the reductive methylation of 2'-deoxyuridine-5'-monophosphate (dUMP) to 2'-deoxythymidine-5'-monophosphate (dTMP) while utilizing 5,10-methylenetetrahydrofolate (mTHF) as the methyl donor, and NADPH and FADH(2) as the reductant. This Rickettsia conorii (strain ATCC VR-613 / Malish 7) protein is Flavin-dependent thymidylate synthase.